The sequence spans 69 residues: uncharacterized protein (69 aa).

Positions 48–69 (EADDVKPRKGRKPKAVSDADKD) are disordered.

This is an uncharacterized protein from Salmonella phage P22 (Bacteriophage P22).